The primary structure comprises 524 residues: Zinc finger CCCH domain-containing protein 37 (524 aa).

Residues Ala19–Leu39 form a disordered region. Over residues Pro24–Pro35 the composition is skewed to pro residues. C3H1-type zinc fingers lie at residues Arg174–Trp202, Arg225–Glu253, and Arg268–Asp296. The segment at Pro300–Thr319 is disordered. C3H1-type zinc fingers lie at residues Arg340–Arg368, Arg420–Asp448, and Arg473–Pro501. Residues Met505–Gln524 are disordered. Positions Ala512 to Gln524 are enriched in low complexity.

In terms of assembly, interacts with HEN4. Interacts with FLK and PEP. In terms of tissue distribution, highly expressed in inflorescences, at intermediate levels in leaves and stems and at lower levels in roots.

The protein localises to the nucleus speckle. Functionally, involved in flower development. Functions in floral reproductive organ identity by binding AGAMOUS (AG) pre-mRNA and promoting its processing. Functions in association with HUA2 and HEN4. The chain is Zinc finger CCCH domain-containing protein 37 (HUA1) from Arabidopsis thaliana (Mouse-ear cress).